The following is a 112-amino-acid chain: uncharacterized protein (112 aa).

Transmembrane regions (helical) follow at residues 33–53 (IIGI…MIIF) and 69–89 (MNNI…HITV).

It is found in the membrane. This is an uncharacterized protein from Saccharomyces cerevisiae (strain ATCC 204508 / S288c) (Baker's yeast).